We begin with the raw amino-acid sequence, 338 residues long: Cytosolic sulfotransferase 16 (338 aa).

81–86 (KTGTTW) is a binding site for 3'-phosphoadenylyl sulfate. The Proton acceptor role is filled by H143. Residues R165, S173, Y231, and 301-303 (RKG) each bind 3'-phosphoadenylyl sulfate.

It belongs to the sulfotransferase 1 family. In terms of tissue distribution, highly expressed in roots, stems and mature leaves. Low expression in young leaves and flowers. Barely detected in siliques.

It localises to the cytoplasm. The enzyme catalyses (Z)-desulfoglucotropeolin + 3'-phosphoadenylyl sulfate = (Z)-glucotropeolin + adenosine 3',5'-bisphosphate + H(+). It carries out the reaction (Z)-indolylmethyl desulfoglucosinolate + 3'-phosphoadenylyl sulfate = (Z)-glucobrassicin + adenosine 3',5'-bisphosphate + H(+). With respect to regulation, inhibited by phosphoadenosine 5'-phosphate (PAP). Functionally, sulfotransferase that utilizes 3'-phospho-5'-adenylyl sulfate (PAPS) as sulfonate donor to catalyze the sulfate conjugation of desulfo-glucosinolates (dsGSs), the final step in the biosynthesis of the glucosinolate core structure. Substrate preference is desulfo-2-phenylethyl glucosinolate &gt; desulfo-indol-3-yl methyl glucosinolate &gt; desulfo-benzyl glucosinolate &gt; desulfo-6-methylthiohexyl glucosinolate &gt; desulfo-4-methylthiobutyl glucosinolate &gt; desulfo-3-methylthiopropyl glucosinolate &gt; desulfo-singrin &gt; desulfo-3-butenyl glucosinolate. This chain is Cytosolic sulfotransferase 16 (SOT16), found in Arabidopsis thaliana (Mouse-ear cress).